The following is a 471-amino-acid chain: Uronate isomerase (471 aa).

Belongs to the metallo-dependent hydrolases superfamily. Uronate isomerase family.

It catalyses the reaction D-glucuronate = D-fructuronate. The catalysed reaction is aldehydo-D-galacturonate = keto-D-tagaturonate. It functions in the pathway carbohydrate metabolism; pentose and glucuronate interconversion. This is Uronate isomerase from Xanthomonas campestris pv. campestris (strain 8004).